A 123-amino-acid polypeptide reads, in one-letter code: uncharacterized protein (123 aa).

The N-terminal stretch at 1–25 is a signal peptide; sequence MKHGIKALLITLSLACAGMSHSALA. Residues 40–53 are compositionally biased toward low complexity; sequence EAPAAQSKAAVPAK. Residues 40-62 are disordered; it reads EAPAAQSKAAVPAKASDEEGTRV. HhH domains follow at residues 60-90 and 91-120; these read TRVS…IVSY and REEY…NLAV.

This is an uncharacterized protein from Escherichia coli (strain K12).